A 593-amino-acid polypeptide reads, in one-letter code: Probable E3 ubiquitin-protein ligase ARI2 (593 aa).

The segment at 120 to 334 (SMMSCDICVE…ISGHSCGRFQ (215 aa)) is TRIAD supradomain. Zn(2+) is bound by residues Cys-124, Cys-127, Cys-141, His-143, Cys-146, Cys-149, Cys-168, Cys-173, Cys-215, Cys-221, Cys-237, Cys-239, Cys-244, Cys-247, His-252, Cys-257, Cys-284, and Cys-287. The RING-type 1 zinc-finger motif lies at 124 to 173 (CDICVEDVPGYQLTRMDCGHSFCNNCWTGHFTVKINEGQSKRIICMAHKC). The segment at 195–257 (EKFDRFLLES…SSQAHSPCSC (63 aa)) adopts an IBR-type zinc-finger fold. Residues 284 to 312 (CPKCHKPVEKNGGCNLVTCLCRQSFCWLC) form an RING-type 2; atypical zinc finger. Residue Cys-297 is part of the active site. The Zn(2+) site is built by Cys-302, Cys-304, Cys-309, Cys-312, His-320, and Cys-330.

It belongs to the RBR family. Ariadne subfamily. Zn(2+) serves as cofactor. In terms of tissue distribution, ubiquitous.

The catalysed reaction is [E2 ubiquitin-conjugating enzyme]-S-ubiquitinyl-L-cysteine + [acceptor protein]-L-lysine = [E2 ubiquitin-conjugating enzyme]-L-cysteine + [acceptor protein]-N(6)-ubiquitinyl-L-lysine.. It participates in protein modification; protein ubiquitination. Might act as an E3 ubiquitin-protein ligase, or as part of E3 complex, which accepts ubiquitin from specific E2 ubiquitin-conjugating enzymes and then transfers it to substrates. This Arabidopsis thaliana (Mouse-ear cress) protein is Probable E3 ubiquitin-protein ligase ARI2 (ARI2).